The primary structure comprises 284 residues: 2-dehydro-3-deoxyphosphooctonate aldolase (284 aa).

This sequence belongs to the KdsA family.

The protein resides in the cytoplasm. It catalyses the reaction D-arabinose 5-phosphate + phosphoenolpyruvate + H2O = 3-deoxy-alpha-D-manno-2-octulosonate-8-phosphate + phosphate. It participates in carbohydrate biosynthesis; 3-deoxy-D-manno-octulosonate biosynthesis; 3-deoxy-D-manno-octulosonate from D-ribulose 5-phosphate: step 2/3. The protein operates within bacterial outer membrane biogenesis; lipopolysaccharide biosynthesis. The sequence is that of 2-dehydro-3-deoxyphosphooctonate aldolase from Enterobacter sp. (strain 638).